A 538-amino-acid polypeptide reads, in one-letter code: Calcyphosin-2 (538 aa).

The segment covering 134 to 146 (RNAENTKSNVTHK) has biased composition (polar residues). A disordered region spans residues 134-154 (RNAENTKSNVTHKQSPRNKID). 3 consecutive EF-hand domains span residues 426–461 (RILT…FHLE), 462–497 (VSEK…EMNE), and 498–533 (YRKS…KKHS). Ca(2+) contacts are provided by D439, N443, D450, N477, N479, K481, E486, D511, N513, S515, S517, and N522.

In terms of tissue distribution, abundantly expressed in many tissues. Expressed in brain, colon, heart, kidney, liver, lung, liver, pancreas, placenta, skeletal muscle, testis and thymus. Highest expression in colon, testis, lung, placenta and brain.

In Homo sapiens (Human), this protein is Calcyphosin-2.